Here is a 423-residue protein sequence, read N- to C-terminus: UPF0229 protein VV1_2091 (423 aa).

A disordered region spans residues 81–111 (QFITGDKIERPKGGQGGGGAGDGDASADGEG). Positions 93–102 (GGQGGGGAGD) are enriched in gly residues.

This sequence belongs to the UPF0229 family.

This Vibrio vulnificus (strain CMCP6) protein is UPF0229 protein VV1_2091.